Consider the following 444-residue polypeptide: Elongation factor 1-alpha (444 aa).

A tr-type G domain is found at 15 to 236; it reads KPHINLAVVG…VLDTFQPPPR (222 aa). The tract at residues 24-31 is G1; sequence GHVDNGKS. Position 24 to 31 (24 to 31) interacts with GTP; sequence GHVDNGKS. Residue Ser-31 coordinates Mg(2+). Positions 80-84 are G2; that stretch reads GVTIE. Residues 101-104 form a G3 region; sequence DLPG. GTP is bound by residues 101 to 105 and 163 to 166; these read DLPGH and NKMD. The interval 163-166 is G4; sequence NKMD. Positions 202–204 are G5; the sequence is SAV.

Belongs to the TRAFAC class translation factor GTPase superfamily. Classic translation factor GTPase family. EF-Tu/EF-1A subfamily.

Its subcellular location is the cytoplasm. It catalyses the reaction GTP + H2O = GDP + phosphate + H(+). Its function is as follows. GTP hydrolase that promotes the GTP-dependent binding of aminoacyl-tRNA to the A-site of ribosomes during protein biosynthesis. This is Elongation factor 1-alpha from Pyrobaculum arsenaticum (strain DSM 13514 / JCM 11321 / PZ6).